A 257-amino-acid chain; its full sequence is Neurotrophin-3 (257 aa).

A signal peptide spans 1-18; the sequence is MSILFYVIFLAYLRGIQG. A propeptide spanning residues 19 to 138 is cleaved from the precursor; sequence NNMDQRSLPE…VANRTSRRKR (120 aa). The interval 61–81 is disordered; it reads STLPKAEAPREPERGGPAKSA. Over residues 67–76 the composition is skewed to basic and acidic residues; the sequence is EAPREPERGG. A glycan (N-linked (GlcNAc...) asparagine) is linked at Asn131. Cystine bridges form between Cys152/Cys217, Cys195/Cys246, and Cys205/Cys248.

The protein belongs to the NGF-beta family. Brain and peripheral tissues.

Its subcellular location is the secreted. Functionally, seems to promote the survival of visceral and proprioceptive sensory neurons. This Homo sapiens (Human) protein is Neurotrophin-3 (NTF3).